We begin with the raw amino-acid sequence, 394 residues long: DNA primase large subunit PriL (394 aa).

The [4Fe-4S] cluster site is built by Cys231, Cys340, Cys351, and Cys357.

Belongs to the eukaryotic-type primase large subunit family. In terms of assembly, heterodimer of a small subunit (PriS) and a large subunit (PriL). Requires [4Fe-4S] cluster as cofactor.

Regulatory subunit of DNA primase, an RNA polymerase that catalyzes the synthesis of short RNA molecules used as primers for DNA polymerase during DNA replication. Stabilizes and modulates the activity of the small subunit, increasing the rate of DNA synthesis, and conferring RNA synthesis capability. The DNA polymerase activity may enable DNA primase to also catalyze primer extension after primer synthesis. May also play a role in DNA repair. This Pyrococcus horikoshii (strain ATCC 700860 / DSM 12428 / JCM 9974 / NBRC 100139 / OT-3) protein is DNA primase large subunit PriL.